Here is a 224-residue protein sequence, read N- to C-terminus: Ribonuclease 3 (224 aa).

An RNase III domain is found at Leu4 to Ser126. Residue Glu39 coordinates Mg(2+). Residue Asp43 is part of the active site. Asp112 and Glu115 together coordinate Mg(2+). The active site involves Glu115. One can recognise a DRBM domain in the interval Asp153 to Ile223.

The protein belongs to the ribonuclease III family. As to quaternary structure, homodimer. Mg(2+) serves as cofactor.

The protein resides in the cytoplasm. It carries out the reaction Endonucleolytic cleavage to 5'-phosphomonoester.. Its function is as follows. Digests double-stranded RNA. Involved in the processing of primary rRNA transcript to yield the immediate precursors to the large and small rRNAs (23S and 16S). Processes some mRNAs, and tRNAs when they are encoded in the rRNA operon. Processes pre-crRNA and tracrRNA of type II CRISPR loci if present in the organism. This Mannheimia succiniciproducens (strain KCTC 0769BP / MBEL55E) protein is Ribonuclease 3.